Consider the following 301-residue polypeptide: Transcriptional activator protein NhaR (301 aa).

The HTH lysR-type domain maps to 6–63 (INYNHLYYFWHVYKEGSVVGAAEALYLTPQTITGQIRALEERLQGKLFKRKGRGLEPS). A DNA-binding region (H-T-H motif) is located at residues 23–42 (VVGAAEALYLTPQTITGQIR).

This sequence belongs to the LysR transcriptional regulatory family.

It is found in the cytoplasm. Functionally, plays a role in the positive regulation of NhaA. The chain is Transcriptional activator protein NhaR (nhaR) from Escherichia coli (strain K12).